Reading from the N-terminus, the 115-residue chain is Vitelline membrane protein Vm32E (115 aa).

The first 17 residues, 1 to 17 (MKIVAFTLVAFVALAGA), serve as a signal peptide directing secretion. In terms of domain architecture, VM spans 35-72 (GYPAPPCPTNYLFSCQPNLAPAPCAQEAPAYGSAGAYT).

The protein belongs to the vitelline membrane family.

The protein localises to the secreted. Functionally, major early eggshell protein. This is Vitelline membrane protein Vm32E from Drosophila yakuba (Fruit fly).